A 506-amino-acid chain; its full sequence is Adenylosuccinate synthetase (506 aa).

GTP-binding positions include 35–41 (GDEGKGK) and 63–65 (GHT). The Proton acceptor role is filled by Asp36. 2 residues coordinate Mg(2+): Asp36 and Gly63. IMP contacts are provided by residues 36–39 (DEGK), 61–64 (NAGH), Thr212, Arg226, Asn304, Thr319, and Arg383. The Proton donor role is filled by His64. 379 to 385 (VTTKRKR) is a substrate binding site. GTP is bound by residues Arg385, 411 to 413 (KLD), and 494 to 496 (GVG).

The protein belongs to the adenylosuccinate synthetase family. As to quaternary structure, homodimer. It depends on Mg(2+) as a cofactor.

It localises to the cytoplasm. The enzyme catalyses IMP + L-aspartate + GTP = N(6)-(1,2-dicarboxyethyl)-AMP + GDP + phosphate + 2 H(+). It participates in purine metabolism; AMP biosynthesis via de novo pathway; AMP from IMP: step 1/2. In terms of biological role, plays an important role in the de novo pathway and in the salvage pathway of purine nucleotide biosynthesis. Catalyzes the first committed step in the biosynthesis of AMP from IMP. In Drosophila yakuba (Fruit fly), this protein is Adenylosuccinate synthetase.